The following is a 706-amino-acid chain: ABC transporter D family member 2, chloroplastic (706 aa).

The N-terminal 44 residues, 1–44 (MILMITAPVCPPHLLLRHSSLLRHESSIGNFHRKKNPRFRTVSC), are a transit peptide targeting the chloroplast. Serine 45 bears the N-acetylserine mark. 5 helical membrane passes run 88 to 108 (LAAV…FNFL), 124 to 144 (FTKQ…FFVL), 200 to 222 (TALS…SNIL), 237 to 257 (SFGG…LNFL), and 326 to 346 (ILPV…FGVI). The 285-residue stretch at 88 to 372 (LAAVFALTLA…VVYQFQAISS (285 aa)) folds into the ABC transmembrane type-1 domain. The ABC transporter domain occupies 430-697 (LEIEELTLQT…DAQDSLYGRL (268 aa)). ATP is bound at residue 464–471 (GPSGSGKT). The interval 545-569 (TTPGGSNIDGSPPLLIREDGNEKPT) is disordered. A compositionally biased stretch (basic and acidic residues) spans 560 to 569 (IREDGNEKPT).

The protein belongs to the ABC transporter superfamily. ABCD family. Peroxisomal fatty acyl CoA transporter (TC 3.A.1.203) subfamily. In terms of assembly, homodimer or heterodimer.

The protein localises to the membrane. The protein resides in the plastid. It is found in the chloroplast. In Arabidopsis thaliana (Mouse-ear cress), this protein is ABC transporter D family member 2, chloroplastic (ABCC2).